Consider the following 156-residue polypeptide: Transcription elongation factor GreA (156 aa).

A coiled-coil region spans residues 46-66 (AEYHAAREKQSFVEGRIKELE).

It belongs to the GreA/GreB family.

In terms of biological role, necessary for efficient RNA polymerase transcription elongation past template-encoded arresting sites. The arresting sites in DNA have the property of trapping a certain fraction of elongating RNA polymerases that pass through, resulting in locked ternary complexes. Cleavage of the nascent transcript by cleavage factors such as GreA or GreB allows the resumption of elongation from the new 3'terminus. GreA releases sequences of 2 to 3 nucleotides. This chain is Transcription elongation factor GreA, found in Paracoccus denitrificans (strain Pd 1222).